The primary structure comprises 245 residues: 5-oxoprolinase subunit A (245 aa).

The protein belongs to the LamB/PxpA family. As to quaternary structure, forms a complex composed of PxpA, PxpB and PxpC.

It catalyses the reaction 5-oxo-L-proline + ATP + 2 H2O = L-glutamate + ADP + phosphate + H(+). Functionally, catalyzes the cleavage of 5-oxoproline to form L-glutamate coupled to the hydrolysis of ATP to ADP and inorganic phosphate. The sequence is that of 5-oxoprolinase subunit A from Yersinia enterocolitica serotype O:8 / biotype 1B (strain NCTC 13174 / 8081).